We begin with the raw amino-acid sequence, 224 residues long: Acyl-protein thioesterase 1 (224 aa).

Active-site charge relay system residues include Ser-116, Asp-170, and His-203.

The protein belongs to the AB hydrolase superfamily. AB hydrolase 2 family.

It is found in the cytoplasm. It localises to the nucleus. It catalyses the reaction S-hexadecanoyl-L-cysteinyl-[protein] + H2O = L-cysteinyl-[protein] + hexadecanoate + H(+). Functionally, hydrolyzes fatty acids from S-acylated cysteine residues in proteins with a strong preference for palmitoylated G-alpha proteins over other acyl substrates. Mediates the deacylation of G-alpha proteins such as GPA1 in vivo, but has weak or no activity toward palmitoylated Ras proteins. Has weak lysophospholipase activity in vitro; however such activity may not exist in vivo. This is Acyl-protein thioesterase 1 from Schizosaccharomyces pombe (strain 972 / ATCC 24843) (Fission yeast).